We begin with the raw amino-acid sequence, 236 residues long: Small ribosomal subunit protein uS2c (236 aa).

Component of the chloroplast small ribosomal subunit (SSU). Mature 70S chloroplast ribosomes of higher plants consist of a small (30S) and a large (50S) subunit. The 30S small subunit contains 1 molecule of ribosomal RNA (16S rRNA) and 24 different proteins. The 50S large subunit contains 3 rRNA molecules (23S, 5S and 4.5S rRNA) and 33 different proteins.

The protein localises to the plastid. Its subcellular location is the chloroplast. Component of the chloroplast ribosome (chloro-ribosome), a dedicated translation machinery responsible for the synthesis of chloroplast genome-encoded proteins, including proteins of the transcription and translation machinery and components of the photosynthetic apparatus. The sequence is that of Small ribosomal subunit protein uS2c (rps2) from Spinacia oleracea (Spinach).